The following is a 333-amino-acid chain: Ribosomal RNA small subunit methyltransferase H (333 aa).

S-adenosyl-L-methionine is bound by residues 31–33 (GGY), Asp-49, Phe-76, Asp-134, and Gln-141.

It belongs to the methyltransferase superfamily. RsmH family.

The protein resides in the cytoplasm. The enzyme catalyses cytidine(1402) in 16S rRNA + S-adenosyl-L-methionine = N(4)-methylcytidine(1402) in 16S rRNA + S-adenosyl-L-homocysteine + H(+). Specifically methylates the N4 position of cytidine in position 1402 (C1402) of 16S rRNA. The sequence is that of Ribosomal RNA small subunit methyltransferase H from Wolbachia sp. subsp. Brugia malayi (strain TRS).